Consider the following 596-residue polypeptide: Aspartic proteinase yapsin-7 (596 aa).

Residues 1–25 (MTCLILWYLWLISTFQLEFATASTA) form the signal peptide. 2 N-linked (GlcNAc...) asparagine glycosylation sites follow: asparagine 26 and asparagine 59. The Lumenal portion of the chain corresponds to 26 to 575 (NTTTTAKSGT…SPYTFNKDPA (550 aa)). The region spanning 56 to 440 (YYVNSTFGTP…DLEDNTIAIA (385 aa)) is the Peptidase A1 domain. The active site involves aspartate 74. Asparagine 106, asparagine 131, asparagine 140, asparagine 143, asparagine 148, asparagine 175, and asparagine 308 each carry an N-linked (GlcNAc...) asparagine glycan. Aspartate 321 is an active-site residue. N-linked (GlcNAc...) asparagine glycosylation is found at asparagine 391, asparagine 455, asparagine 478, asparagine 484, asparagine 549, and asparagine 552. The helical transmembrane segment at 576-596 (GHVTRIASLLLLSIFSILIVL) threads the bilayer.

This sequence belongs to the peptidase A1 family.

It localises to the cytoplasm. The protein localises to the endoplasmic reticulum membrane. In Saccharomyces cerevisiae (strain ATCC 204508 / S288c) (Baker's yeast), this protein is Aspartic proteinase yapsin-7 (YPS7).